A 426-amino-acid polypeptide reads, in one-letter code: Crinkler effector protein 4 (426 aa).

Positions 20–57 (VEIDDSAKVSKLKKVIKEENPATITCDAKDLQLFLAKK) are LQLFLAK domain. The interval 59–107 (DAWLDGAGAAAVELDEHGHPQGCVQMDPTLWVKNPKHFGDNFQPGEGQV) is DWL domain. Positions 108 to 114 (HVLVVVP) match the HVLVXXP motif motif. An effector domain region spans residues 115–426 (EGVVGSASET…RSIPTLSYFS (312 aa)).

It belongs to the Crinkler effector family.

Its subcellular location is the secreted. The protein resides in the host nucleus. Its function is as follows. Secreted effector that is critical to pathogenesis by suppressing plant immune responsess. Promotes Phytophthora infection by suppressing the H(2)O(2) accumulation and callose deposition. May induce cell death by regulating expression of cell death-related genes. In Phytophthora capsici, this protein is Crinkler effector protein 4.